The chain runs to 209 residues: Large ribosomal subunit protein uL3 (209 aa).

Q150 carries the N5-methylglutamine modification.

The protein belongs to the universal ribosomal protein uL3 family. As to quaternary structure, part of the 50S ribosomal subunit. Forms a cluster with proteins L14 and L19. In terms of processing, methylated by PrmB.

One of the primary rRNA binding proteins, it binds directly near the 3'-end of the 23S rRNA, where it nucleates assembly of the 50S subunit. This is Large ribosomal subunit protein uL3 from Citrobacter koseri (strain ATCC BAA-895 / CDC 4225-83 / SGSC4696).